The primary structure comprises 184 residues: F(420)H(2) dehydrogenase subunit B (184 aa).

The interval 1-20 is disordered; the sequence is MGEVKETKTNNSKENPEEEV. [4Fe-4S] cluster contacts are provided by Cys-61, Cys-62, Cys-126, and Cys-156.

Belongs to the complex I 20 kDa subunit family. In terms of assembly, the FPO complex is composed of at least 13 different subunits. It depends on FAD as a cofactor. [4Fe-4S] cluster is required as a cofactor.

The protein resides in the cell inner membrane. It carries out the reaction methanophenazine + reduced coenzyme F420-(gamma-L-Glu)(n) = dihydromethanophenazine + oxidized coenzyme F420-(gamma-L-Glu)(n) + H(+). In terms of biological role, component of the F(420)H(2) dehydrogenase (FPO complex) which is part of the energy-conserving F(420)H(2):heterodisulfide oxidoreductase system. The membrane-bound electron transfer system of the complex plays an important role in the metabolism of methylotrophic methanogens when the organisms grow on methanol or methylamines. Catalyzes the oxidation of methanophenazine to dihydromethanophenazine. It shuttles electrons from F(420)H(2), via FAD and iron-sulfur (Fe-S) centers, to methanophenazine (an electron carrier in the membrane). It couples the redox reaction to proton translocation (for every two electrons transferred, two hydrogen ions are translocated across the cytoplasmic membrane), and thus conserves the redox energy in a proton gradient. It also catalyzes the oxidation of F(420)H(2) with quinones such as 2,3-dimethyl-1,4-naphthoquinone, 2-methyl-1,4-naphthoquinone and tetramethyl-p-benzoquinone. The protein is F(420)H(2) dehydrogenase subunit B (fpoB) of Methanosarcina mazei (strain ATCC BAA-159 / DSM 3647 / Goe1 / Go1 / JCM 11833 / OCM 88) (Methanosarcina frisia).